Reading from the N-terminus, the 954-residue chain is Glycine dehydrogenase (decarboxylating) (954 aa).

Lysine 704 carries the post-translational modification N6-(pyridoxal phosphate)lysine.

Belongs to the GcvP family. As to quaternary structure, the glycine cleavage system is composed of four proteins: P, T, L and H. Pyridoxal 5'-phosphate serves as cofactor.

It catalyses the reaction N(6)-[(R)-lipoyl]-L-lysyl-[glycine-cleavage complex H protein] + glycine + H(+) = N(6)-[(R)-S(8)-aminomethyldihydrolipoyl]-L-lysyl-[glycine-cleavage complex H protein] + CO2. Its function is as follows. The glycine cleavage system catalyzes the degradation of glycine. The P protein binds the alpha-amino group of glycine through its pyridoxal phosphate cofactor; CO(2) is released and the remaining methylamine moiety is then transferred to the lipoamide cofactor of the H protein. This is Glycine dehydrogenase (decarboxylating) from Rhizobium leguminosarum bv. trifolii (strain WSM2304).